The primary structure comprises 201 residues: Large ribosomal subunit protein bL9 (201 aa).

The span at 150-165 (EAERQAAGEDLTQRRD) shows a compositional bias: basic and acidic residues. Residues 150–201 (EAERQAAGEDLTQRRDDEEEEAVEAAEFFESEELAPGDEEEEAAGEEEDAKE) are disordered. A compositionally biased stretch (acidic residues) spans 166-201 (DEEEEAVEAAEFFESEELAPGDEEEEAAGEEEDAKE).

It belongs to the bacterial ribosomal protein bL9 family.

Binds to the 23S rRNA. The chain is Large ribosomal subunit protein bL9 from Parvibaculum lavamentivorans (strain DS-1 / DSM 13023 / NCIMB 13966).